Consider the following 75-residue polypeptide: Conotoxin Vn5.5 (75 aa).

The first 19 residues, 1–19, serve as a signal peptide directing secretion; that stretch reads MLCLPVFIILLLLASPAAP. Positions 20–59 are excised as a propeptide; it reads NPLEKRIQSDLIRAALEDADMKTDEREIVNIIDSISDVAK. The residue at position 60 (Gln60) is a Pyrrolidone carboxylic acid.

This sequence belongs to the conotoxin T superfamily. Contains 2 disulfide bonds that can be either 'C1-C3, C2-C4' or 'C1-C4, C2-C3', since these disulfide connectivities have been observed for conotoxins with cysteine framework V (for examples, see AC P0DQQ7 and AC P81755). As to expression, expressed by the venom duct.

It localises to the secreted. The sequence is that of Conotoxin Vn5.5 from Conus ventricosus (Mediterranean cone).